The primary structure comprises 110 residues: Ribonuclease P protein component 1 (110 aa).

Belongs to the eukaryotic/archaeal RNase P protein component 1 family. As to quaternary structure, consists of a catalytic RNA component and at least 4-5 protein subunits.

It localises to the cytoplasm. It carries out the reaction Endonucleolytic cleavage of RNA, removing 5'-extranucleotides from tRNA precursor.. In terms of biological role, part of ribonuclease P, a protein complex that generates mature tRNA molecules by cleaving their 5'-ends. In Methanosarcina mazei (strain ATCC BAA-159 / DSM 3647 / Goe1 / Go1 / JCM 11833 / OCM 88) (Methanosarcina frisia), this protein is Ribonuclease P protein component 1.